The primary structure comprises 390 residues: Guanine nucleotide exchange factor for Rab-3A (390 aa).

The tract at residues 1–60 (MWSGQPHPDEGHPPPLEAVPVPWKSVGPCKSHRESLGGLPETPAGEEAQGEEGPAATQLD) is disordered. Residues 40-58 (PETPAGEEAQGEEGPAATQ) show a composition bias toward low complexity. Positions 73 to 161 (EKGSEFLKEE…AEVTALKTLV (89 aa)) form a coiled coil. The interval 166 to 194 (PASPNRELHPQLLSPTKAGPRKGHLRHKS) is disordered. Phosphoserine occurs at positions 168 and 179. The segment covering 184–194 (GPRKGHLRHKS) has biased composition (basic residues).

This sequence belongs to the SEC2 family. In terms of assembly, interacts with RAB3A and IHPK1 through the coiled-coil domain. This interaction is competitive. IHPK1 kinase activity is not required for this interaction.

Functionally, guanine nucleotide exchange factor (GEF) which may activate RAB3A, a GTPase that regulates synaptic vesicle exocytosis. Promotes the exchange of GDP to GTP, converting inactive GDP-bound Rab proteins into their active GTP-bound form. May also activate RAB8A and RAB8B. The sequence is that of Guanine nucleotide exchange factor for Rab-3A (RAB3IL1) from Bos taurus (Bovine).